Consider the following 605-residue polypeptide: Protein DENND6A (605 aa).

Positions methionine 1 to alanine 20 are disordered. Residues histidine 60 to lysine 239 enclose the uDENN domain. Residue serine 124 is modified to Phosphoserine. Positions glutamate 265 to lysine 390 constitute a cDENN domain. Residues leucine 392 to lysine 525 enclose the dDENN domain. At lysine 507 the chain carries N6-methyllysine.

This sequence belongs to the DENND6 family.

Its subcellular location is the recycling endosome. It localises to the cytoplasm. Its function is as follows. Guanine nucleotide exchange factor (GEF) for RAB14. Component of an endocytic recycling pathway that is required for the control of ADAM10 transport, shedding of N-cadherin/CDH2 by ADAM9 or ADAM10 and regulation of cell-cell junctions. Required for RAB14 recruitment to recycling endosomes. This chain is Protein DENND6A (Dennd6a), found in Mus musculus (Mouse).